A 226-amino-acid polypeptide reads, in one-letter code: Leucyl/phenylalanyl-tRNA--protein transferase (226 aa).

Belongs to the L/F-transferase family.

The protein resides in the cytoplasm. It carries out the reaction N-terminal L-lysyl-[protein] + L-leucyl-tRNA(Leu) = N-terminal L-leucyl-L-lysyl-[protein] + tRNA(Leu) + H(+). The enzyme catalyses N-terminal L-arginyl-[protein] + L-leucyl-tRNA(Leu) = N-terminal L-leucyl-L-arginyl-[protein] + tRNA(Leu) + H(+). It catalyses the reaction L-phenylalanyl-tRNA(Phe) + an N-terminal L-alpha-aminoacyl-[protein] = an N-terminal L-phenylalanyl-L-alpha-aminoacyl-[protein] + tRNA(Phe). Functions in the N-end rule pathway of protein degradation where it conjugates Leu, Phe and, less efficiently, Met from aminoacyl-tRNAs to the N-termini of proteins containing an N-terminal arginine or lysine. The polypeptide is Leucyl/phenylalanyl-tRNA--protein transferase (Azotobacter vinelandii (strain DJ / ATCC BAA-1303)).